A 419-amino-acid chain; its full sequence is Phosphatidylcholine:ceramide cholinephosphotransferase 1 (419 aa).

One can recognise an SAM domain in the interval 13–76 (WSPKKVADWL…LDMIETLKME (64 aa)). At Ser-14 the chain carries Phosphoserine. 5 helical membrane-spanning segments follow: residues 142–162 (FLAF…ISVV), 190–210 (FSIC…QWLL), 221–241 (FFCI…VTTL), 282–302 (MCGD…YLFI), and 310–330 (LWWY…CILL). His-291 is a catalytic residue. Residues 331–419 (AHDHYTVDVV…VKYSRLVNDT (89 aa)) are Cytoplasmic-facing. Active-site residues include His-334 and Asp-338.

Belongs to the sphingomyelin synthase family. In terms of tissue distribution, isoform 1 is widely expressed, isoform 2 shows a more narrow distribution and isoform 3 is detected only in testis and heart.

Its subcellular location is the golgi apparatus membrane. It catalyses the reaction an N-acylsphing-4-enine + a 1,2-diacyl-sn-glycero-3-phosphocholine = a sphingomyelin + a 1,2-diacyl-sn-glycerol. The catalysed reaction is 1-(9Z-octadecenoyl)-2-acyl-sn-3-glycerol + a sphingomyelin = a 1-(9Z-octadecenoyl)-2-acyl-sn-glycero-3-phosphocholine + an N-acylsphing-4-enine. The enzyme catalyses N-hexadecanoylsphinganine + a 1,2-diacyl-sn-glycero-3-phosphocholine = N-hexadecanoyl-sphinganine-1-phosphocholine + a 1,2-diacyl-sn-glycerol. It carries out the reaction N-hexadecanoyl-(4R)-hydroxysphinganine + a 1,2-diacyl-sn-glycero-3-phosphocholine = N-hexadecanoyl-(4R)-hydroxysphinganine-phosphocholine + a 1,2-diacyl-sn-glycerol. It catalyses the reaction an N-acylsphing-4-enine + a 1,2-diacyl-sn-glycero-3-phosphoethanolamine = an N-acylsphing-4-enine 1-phosphoethanolamine + a 1,2-diacyl-sn-glycerol. Its pathway is sphingolipid metabolism. Its function is as follows. Major sphingomyelin synthase at the Golgi apparatus. Catalyzes the reversible transfer of phosphocholine moiety in sphingomyelin biosynthesis: in the forward reaction transfers phosphocholine head group of phosphatidylcholine (PC) on to ceramide (CER) to form ceramide phosphocholine (sphingomyelin, SM) and diacylglycerol (DAG) as by-product, and in the reverse reaction transfers phosphocholine from SM to DAG to form PC and CER. The direction of the reaction depends on the levels of CER and DAG in Golgi membranes. Converts the newly synthesized CER, that is transported from the endoplasmic reticulum to the trans-Golgi by the Cer transport protein (CERT), to SM. Can form a heteromeric complex with glucosylceramide synthase (GCS) increasing SMS activity and reducing glucosylceramide synthesis, a critical mechanism that controls the metabolic fate of CER in the Golgi. Does not use free phosphorylcholine or CDP-choline as donor. Can also transfer phosphoethanolamine head group of phosphatidylethanolamine (PE) on to CER to form ceramide phosphoethanolamine (CPE). Regulates receptor-mediated signal transduction via mitogenic DAG and proapoptotic CER, as well as via SM, a structural component of membrane rafts that serve as platforms for signal transduction and protein sorting. Plays a role in secretory transport via regulation of DAG pool at the Golgi apparatus and its downstream effects on PRKD1. In terms of biological role, (Microbial infection) Contributes to the brain SM production for Japanese encephalitis virus attachment and infection. This Mus musculus (Mouse) protein is Phosphatidylcholine:ceramide cholinephosphotransferase 1 (Sgms1).